We begin with the raw amino-acid sequence, 67 residues long: Beta-defensin 9 (67 aa).

An N-terminal signal peptide occupies residues 1–24 (MRTLCSLLLICCLLFSYTTPAANS). Intrachain disulfides connect C34/C62, C41/C55, and C45/C63.

Belongs to the beta-defensin family. Weakly expressed in adult and neonatal brain.

It localises to the secreted. Functionally, has antibacterial activity. The chain is Beta-defensin 9 (Defb9) from Mus musculus (Mouse).